The chain runs to 548 residues: uncharacterized protein (548 aa).

The DhaL domain maps to 8 to 200 (KLFADMIIQG…LLCVYEGFLK (193 aa)).

This is an uncharacterized protein from Staphylococcus aureus (strain MRSA252).